A 185-amino-acid polypeptide reads, in one-letter code: Elongation factor P (185 aa).

This sequence belongs to the elongation factor P family.

It localises to the cytoplasm. It functions in the pathway protein biosynthesis; polypeptide chain elongation. Functionally, involved in peptide bond synthesis. Stimulates efficient translation and peptide-bond synthesis on native or reconstituted 70S ribosomes in vitro. Probably functions indirectly by altering the affinity of the ribosome for aminoacyl-tRNA, thus increasing their reactivity as acceptors for peptidyl transferase. This is Elongation factor P from Carboxydothermus hydrogenoformans (strain ATCC BAA-161 / DSM 6008 / Z-2901).